A 309-amino-acid polypeptide reads, in one-letter code: Malate dehydrogenase (309 aa).

NAD(+) contacts are provided by residues 9–14 and aspartate 33; that span reads GAGFVG. Arginine 82 and arginine 88 together coordinate substrate. NAD(+)-binding positions include asparagine 95 and 118–120; that span reads VNN. Residues asparagine 120 and arginine 151 each contribute to the substrate site. Histidine 175 (proton acceptor) is an active-site residue.

This sequence belongs to the LDH/MDH superfamily. MDH type 3 family.

The enzyme catalyses (S)-malate + NAD(+) = oxaloacetate + NADH + H(+). Catalyzes the reversible oxidation of malate to oxaloacetate. This Roseiflexus castenholzii (strain DSM 13941 / HLO8) protein is Malate dehydrogenase.